The following is a 102-amino-acid chain: MFVKTGDKVRVIAGKDKGKEGTITKTVAGKDRVVVEGVNIVKKHQKPSNEYPQGGVIDIEAPIHVSNVQLLDPSTNEPTKVAFKIEDGKKVRVSKKSGNVLG.

The protein belongs to the universal ribosomal protein uL24 family. Part of the 50S ribosomal subunit.

Its function is as follows. One of two assembly initiator proteins, it binds directly to the 5'-end of the 23S rRNA, where it nucleates assembly of the 50S subunit. In terms of biological role, one of the proteins that surrounds the polypeptide exit tunnel on the outside of the subunit. The chain is Large ribosomal subunit protein uL24 from Leuconostoc citreum (strain KM20).